The sequence spans 260 residues: Isopentenyl phosphate kinase (260 aa).

Residue Lys-6–Ser-10 participates in ATP binding. Residue Gly-55 coordinates substrate. Gly-56 is a binding site for ATP. Substrate-binding residues include His-60 and Gly-159. Asp-180, Gly-217, and Lys-221 together coordinate ATP.

Belongs to the isopentenyl phosphate kinase family. Homodimer.

The enzyme catalyses isopentenyl phosphate + ATP = isopentenyl diphosphate + ADP. In terms of biological role, catalyzes the formation of isopentenyl diphosphate (IPP), the building block of all isoprenoids. Has no activity with farnesyl phosphate. The chain is Isopentenyl phosphate kinase from Methanocaldococcus jannaschii (strain ATCC 43067 / DSM 2661 / JAL-1 / JCM 10045 / NBRC 100440) (Methanococcus jannaschii).